Reading from the N-terminus, the 257-residue chain is 3-oxo-5-alpha-steroid 4-dehydrogenase 1 (257 aa).

The next 6 helical transmembrane spans lie at 7–27, 50–70, 84–104, 109–129, 149–169, and 208–228; these read FLLDALAYLECALGVVCYVLL, AAWTVQELPSLALPLLACAGA, ILLAMFLVHYAQRSLVFPFLI, PMPLYAFLLAFIFCTYNGYLQ, FLTGSALWLIGMLINIHSDHV, and ALASWSIQGWAFAVFTFCVLF.

It belongs to the steroid 5-alpha reductase family.

Its subcellular location is the microsome membrane. It localises to the endoplasmic reticulum membrane. It catalyses the reaction a 3-oxo-5alpha-steroid + NADP(+) = a 3-oxo-Delta(4)-steroid + NADPH + H(+). The enzyme catalyses 5alpha-pregnane-3,20-dione + NADP(+) = progesterone + NADPH + H(+). The catalysed reaction is 17beta-hydroxy-5alpha-androstan-3-one + NADP(+) = testosterone + NADPH + H(+). It carries out the reaction androst-4-ene-3,17-dione + NADPH + H(+) = 5alpha-androstan-3,17-dione + NADP(+). Its function is as follows. Converts testosterone into 5-alpha-dihydrotestosterone and progesterone or corticosterone into their corresponding 5-alpha-3-oxosteroids. It plays a central role in sexual differentiation and androgen physiology. The sequence is that of 3-oxo-5-alpha-steroid 4-dehydrogenase 1 (SRD5A1) from Bos taurus (Bovine).